A 636-amino-acid polypeptide reads, in one-letter code: Capsid vertex component 2 (636 aa).

Residues 1–48 (MSLLHTFWRLPVAVFFEPHEENVLRCPERVLRRLLEDAAVAMRGGGWR) are interaction with major capsid protein/MCP. Residues 97-125 (DEGPSPRTLLQPPCRPRSSSPGTGVAGAS) are disordered.

The protein belongs to the herpesviridae CVC2 protein family. As to quaternary structure, heterodimerizes with CVC1. Interacts with major capsid protein/MCP and triplex capsid protein 1/TRX1 at the pentamer vertices. Interacts with the large tegument protein/LTP.

It localises to the virion. The protein resides in the host nucleus. In terms of biological role, capsid vertex-specific component that plays a role during viral DNA encapsidation, assuring correct genome cleavage and presumably stabilizing capsids that contain full-length viral genomes. Participates in the interaction between the capsid and the tegument through interaction with the large tegument protein/LTP. The polypeptide is Capsid vertex component 2 (Homo sapiens (Human)).